The following is a 550-amino-acid chain: Centrosomal and chromosomal factor (550 aa).

Coiled coils occupy residues 20-44, 105-126, and 239-274; these read SALS…QQHH, VANS…QQQQ, and ATSA…QQAH. 4 disordered regions span residues 21 to 145, 208 to 320, 361 to 380, and 392 to 465; these read ALSA…KDYS, LSSG…HAAN, SHYA…RDAM, and SGKL…SASV. 3 stretches are compositionally biased toward low complexity: residues 24 to 71, 81 to 136, and 221 to 320; these read ALQQ…QQQQ, ANTS…NAAP, and AAVA…HAAN. Composition is skewed to low complexity over residues 396-412 and 450-462; these read QQSQ…QQHC and SATP…SGGS.

Homodimer. Interacts with esc, Trl, E(z), scm and ph-p in vitro. Found in vivo in an esc-containing complex, which may be the Esc/E(z) complex. Also found in vivo in a Pc-containing complex that may be the PRC1 complex, but does not interact with Pc directly. Interacts with cyclin CycG.

Its subcellular location is the nucleus. It localises to the cytoplasm. It is found in the cytoskeleton. The protein localises to the microtubule organizing center. The protein resides in the centrosome. Its subcellular location is the chromosome. In terms of biological role, essential protein required for proper condensation of mitotic chromosomes and progression through mitosis. Binds to specific polytene chromosome sites, many of which are shared with the posterior sex combs (Psc) protein. Involved in maintaining Abd-B repression outside its normal expression domain. The sequence is that of Centrosomal and chromosomal factor (corto) from Drosophila melanogaster (Fruit fly).